Reading from the N-terminus, the 160-residue chain is SsrA-binding protein (160 aa).

The disordered stretch occupies residues 131–160 (KKEFDKRHTEKERDSDREIQRAMRTKGKDD).

It belongs to the SmpB family.

The protein localises to the cytoplasm. Its function is as follows. Required for rescue of stalled ribosomes mediated by trans-translation. Binds to transfer-messenger RNA (tmRNA), required for stable association of tmRNA with ribosomes. tmRNA and SmpB together mimic tRNA shape, replacing the anticodon stem-loop with SmpB. tmRNA is encoded by the ssrA gene; the 2 termini fold to resemble tRNA(Ala) and it encodes a 'tag peptide', a short internal open reading frame. During trans-translation Ala-aminoacylated tmRNA acts like a tRNA, entering the A-site of stalled ribosomes, displacing the stalled mRNA. The ribosome then switches to translate the ORF on the tmRNA; the nascent peptide is terminated with the 'tag peptide' encoded by the tmRNA and targeted for degradation. The ribosome is freed to recommence translation, which seems to be the essential function of trans-translation. In Stutzerimonas stutzeri (strain A1501) (Pseudomonas stutzeri), this protein is SsrA-binding protein.